The chain runs to 87 residues: Kappa-4-bungarotoxin (87 aa).

A signal peptide spans 1-21 (MKTLLLTLVVVTIVCLDLGYT). Disulfide bonds link Cys-24–Cys-42, Cys-35–Cys-63, Cys-48–Cys-52, Cys-67–Cys-79, and Cys-80–Cys-85.

Belongs to the three-finger toxin family. Long-chain subfamily. Kappa-neurotoxin sub-subfamily. In terms of assembly, homo- and heterodimer; non-covalently linked. In terms of tissue distribution, expressed by the venom gland.

The protein resides in the secreted. Postsynaptic neurotoxin that binds and inhibits neuronal nicotinic acetylcholine receptors (nAChR) with high affinity (IC(50)&lt;100 nM). Is a selective, and slowly reversible antagonist of alpha-3/CHRNA3-containing and some alpha-4/CHRNA4-containing AChRs. This chain is Kappa-4-bungarotoxin, found in Bungarus multicinctus (Many-banded krait).